Consider the following 290-residue polypeptide: Short chain dehydrogenase andI (290 aa).

NADP(+) is bound by residues I35, N120, R154, Y186, K190, V219, and T221. The active-site Proton acceptor is Y186. The Lowers pKa of active site Tyr role is filled by K190.

This sequence belongs to the short-chain dehydrogenases/reductases (SDR) family.

The protein operates within secondary metabolite biosynthesis; terpenoid biosynthesis. Functionally, short chain dehydrogenase; part of the gene cluster that mediates the biosynthesis of anditomin, a fungal meroterpenoid. The first step of the pathway is the synthesis of 3,5-dimethylorsellinic acid (DMOA) by the polyketide synthase andM. DMOA is then converted to the phthalide compound 5,7-dihydroxy-4,6-dimethylphthalide (DHDMP) by the cytochrome P450 monooxygenase andK, which is further prenylated by the prenyltransferase andD to yield farnesyl-DHDMP. Further epoxidation by the FAD-dependent monooxygenase andE leads to epoxyfarnesyl-DHDMP. The next step involves the terpene cyclase andB that converts epoxyfarnesyl-DHDMP into preandiloid A through opening of the epoxide ring followed by the cyclization of the farnesyl moiety. Preandiloid A is in turn oxidized at the C-3 hydroxyl group to yield preandiloid B by the dehydrogenase andC. The dioxygenase andA is solely responsible for the dehydrogenation of preandiloid B leading to the enone preandiloid C, as well as for the intriguing structural rearrangement to generate the bicyclo[2.2.2]octane core, transforming preandiloid C into andiconin. FAD-binding monooxygenase andJ then produces andilesin D which is reduced by dehydrogenase andI to yield andilesin A. Action of acetyltransferase andG followed by a spontaneous acetate elimination leads then to andilesin B, which is in turn substrate of the short chain dehydrogenase andH to yield andilesin C. Finally, the dioxygenase andF catalyzes the transformation of andilesin C to anditomin. This chain is Short chain dehydrogenase andI, found in Emericella variicolor (Aspergillus stellatus).